A 279-amino-acid polypeptide reads, in one-letter code: 3-methyl-2-oxobutanoate hydroxymethyltransferase (279 aa).

Mg(2+) is bound by residues aspartate 53 and aspartate 92. 3-methyl-2-oxobutanoate is bound by residues 53–54 (DS), aspartate 92, and lysine 122. Residue glutamate 124 coordinates Mg(2+). Glutamate 191 functions as the Proton acceptor in the catalytic mechanism.

This sequence belongs to the PanB family. Homodecamer; pentamer of dimers. It depends on Mg(2+) as a cofactor.

The protein resides in the cytoplasm. It carries out the reaction 3-methyl-2-oxobutanoate + (6R)-5,10-methylene-5,6,7,8-tetrahydrofolate + H2O = 2-dehydropantoate + (6S)-5,6,7,8-tetrahydrofolate. It functions in the pathway cofactor biosynthesis; (R)-pantothenate biosynthesis; (R)-pantoate from 3-methyl-2-oxobutanoate: step 1/2. Functionally, catalyzes the reversible reaction in which hydroxymethyl group from 5,10-methylenetetrahydrofolate is transferred onto alpha-ketoisovalerate to form ketopantoate. The polypeptide is 3-methyl-2-oxobutanoate hydroxymethyltransferase (Maricaulis maris (strain MCS10) (Caulobacter maris)).